We begin with the raw amino-acid sequence, 653 residues long: Fructose-1,6-bisphosphatase class 3 (653 aa).

The protein belongs to the FBPase class 3 family. Mn(2+) is required as a cofactor.

It catalyses the reaction beta-D-fructose 1,6-bisphosphate + H2O = beta-D-fructose 6-phosphate + phosphate. It participates in carbohydrate biosynthesis; gluconeogenesis. The chain is Fructose-1,6-bisphosphatase class 3 from Listeria innocua serovar 6a (strain ATCC BAA-680 / CLIP 11262).